Reading from the N-terminus, the 99-residue chain is Aspartyl/glutamyl-tRNA(Asn/Gln) amidotransferase subunit C (99 aa).

It belongs to the GatC family. In terms of assembly, heterotrimer of A, B and C subunits.

It carries out the reaction L-glutamyl-tRNA(Gln) + L-glutamine + ATP + H2O = L-glutaminyl-tRNA(Gln) + L-glutamate + ADP + phosphate + H(+). It catalyses the reaction L-aspartyl-tRNA(Asn) + L-glutamine + ATP + H2O = L-asparaginyl-tRNA(Asn) + L-glutamate + ADP + phosphate + 2 H(+). Allows the formation of correctly charged Asn-tRNA(Asn) or Gln-tRNA(Gln) through the transamidation of misacylated Asp-tRNA(Asn) or Glu-tRNA(Gln) in organisms which lack either or both of asparaginyl-tRNA or glutaminyl-tRNA synthetases. The reaction takes place in the presence of glutamine and ATP through an activated phospho-Asp-tRNA(Asn) or phospho-Glu-tRNA(Gln). The polypeptide is Aspartyl/glutamyl-tRNA(Asn/Gln) amidotransferase subunit C (Burkholderia thailandensis (strain ATCC 700388 / DSM 13276 / CCUG 48851 / CIP 106301 / E264)).